Consider the following 542-residue polypeptide: Glucans biosynthesis protein D (542 aa).

A signal peptide (tat-type signal) is located at residues M1–A31.

The protein belongs to the OpgD/OpgG family. Post-translationally, predicted to be exported by the Tat system. The position of the signal peptide cleavage has not been experimentally proven.

It localises to the periplasm. Its pathway is glycan metabolism; osmoregulated periplasmic glucan (OPG) biosynthesis. Probably involved in the control of the structural glucose backbone of osmoregulated periplasmic glucans (OPGs). The protein is Glucans biosynthesis protein D of Pseudomonas fluorescens (strain Pf0-1).